The sequence spans 88 residues: Conotoxin tx9a (88 aa).

A signal peptide spans 1-27; it reads MHLSLARSAVLMLLLLFALGNFVVVQS. Positions 28–58 are excised as a propeptide; the sequence is GQITRDVDNGQLTDNRRNLQSKWKPVSLYMS. 3 cysteine pairs are disulfide-bonded: C62-C76, C66-C78, and C72-C83. 4-carboxyglutamate; partial occurs at positions 68 and 73. N87 bears the Asparagine amide mark.

In terms of processing, exists in 4 different forms, depending on gamma-carboxyglutamations. Tx9a-EE does not contain gamma-carboxyglutamate, tx9a-E/gamma has one gamma-carboxyglutamate at position 73, tx9a-gamma/E has one gamma-carboxyglutamate at position 68, and tx9a-agmma/gamma has two gamma-carboxyglutamates at positions 68 and 73. In terms of tissue distribution, expressed by the venom duct. All different gamma-carboxyalted forms are mostly present in part 2, part 3 and part 4 of the venom duct. They are also found in part 1 (proximal part near the venom bulb) and part 5, but in lower quantity.

It localises to the secreted. In terms of biological role, neurotoxin. In vivo, intracranial injection into mice of 10 pmol/g of the peptide induces running in circles and hyperactivity. At higher doses (50 pmol/g), the mice exhibit running and climbing symptoms for close to one hour. Between 130 and 150 pmol/g, characteristic 'spasmodic' symptomatology is elicited. A hand clap would make mice jump high and start running rapidly. When exposed to a loud hand clap, or if the cage cover were dropped, the mice lose motor control and exhibit seizure-like symptoms from which they eventually recover. At the highest doses tested (over 250 pmol/g), after the characteristic spasmodic symptomatology, lethality occurs. Injection of a similar dose range intramuscularly into Siamese fighting fish elicited no unusual symptomatology. The protein is Conotoxin tx9a of Conus textile (Cloth-of-gold cone).